The primary structure comprises 314 residues: tRNA uridine(34) hydroxylase (314 aa).

Residues 135 to 229 enclose the Rhodanese domain; that stretch reads SDPDTIVIDT…YLEEVPEEES (95 aa). Cys-189 acts as the Cysteine persulfide intermediate in catalysis.

The protein belongs to the TrhO family.

The catalysed reaction is uridine(34) in tRNA + AH2 + O2 = 5-hydroxyuridine(34) in tRNA + A + H2O. In terms of biological role, catalyzes oxygen-dependent 5-hydroxyuridine (ho5U) modification at position 34 in tRNAs. This is tRNA uridine(34) hydroxylase from Agrobacterium fabrum (strain C58 / ATCC 33970) (Agrobacterium tumefaciens (strain C58)).